The following is a 1220-amino-acid chain: ATP-dependent helicase/nuclease subunit A (1220 aa).

Positions 9–473 (VIWTDDQWKS…IDLSQNFRSR (465 aa)) constitute a UvrD-like helicase ATP-binding domain. 30–37 (AAAGSGKT) lines the ATP pocket. The UvrD-like helicase C-terminal domain maps to 474 to 782 (PEVLSTTNYL…RMMTIHASKG (309 aa)).

It belongs to the helicase family. AddA subfamily. Heterodimer of AddA and AddB/RexB. The cofactor is Mg(2+).

It catalyses the reaction Couples ATP hydrolysis with the unwinding of duplex DNA by translocating in the 3'-5' direction.. The enzyme catalyses ATP + H2O = ADP + phosphate + H(+). Its function is as follows. The heterodimer acts as both an ATP-dependent DNA helicase and an ATP-dependent, dual-direction single-stranded exonuclease. Recognizes the chi site generating a DNA molecule suitable for the initiation of homologous recombination. The AddA nuclease domain is required for chi fragment generation; this subunit has the helicase and 3' -&gt; 5' nuclease activities. This chain is ATP-dependent helicase/nuclease subunit A, found in Staphylococcus carnosus (strain TM300).